The following is a 208-amino-acid chain: Small ribosomal subunit protein eS8 (208 aa).

Residues 1–27 are disordered; the sequence is MGISRDNWHKRRKTGGKRKPYHKKRKY. Residue G2 is the site of N-myristoyl glycine attachment. Residues 8–26 are compositionally biased toward basic residues; that stretch reads WHKRRKTGGKRKPYHKKRK. N6-acetyllysine occurs at positions 37 and 128. Position 130 is a phosphothreonine (T130). The residue at position 160 (S160) is a Phosphoserine. Glycyl lysine isopeptide (Lys-Gly) (interchain with G-Cter in SUMO2) cross-links involve residues K170 and K193.

Belongs to the eukaryotic ribosomal protein eS8 family. As to quaternary structure, component of the small ribosomal subunit. Identified in a IGF2BP1-dependent mRNP granule complex containing untranslated mRNAs. Part of the small subunit (SSU) processome, composed of more than 70 proteins and the RNA chaperone small nucleolar RNA (snoRNA) U3.

The protein localises to the cytoplasm. It is found in the membrane. The protein resides in the nucleus. Its subcellular location is the nucleolus. Component of the small ribosomal subunit. The ribosome is a large ribonucleoprotein complex responsible for the synthesis of proteins in the cell. Part of the small subunit (SSU) processome, first precursor of the small eukaryotic ribosomal subunit. During the assembly of the SSU processome in the nucleolus, many ribosome biogenesis factors, an RNA chaperone and ribosomal proteins associate with the nascent pre-rRNA and work in concert to generate RNA folding, modifications, rearrangements and cleavage as well as targeted degradation of pre-ribosomal RNA by the RNA exosome. The sequence is that of Small ribosomal subunit protein eS8 (Rps8) from Mus musculus (Mouse).